The sequence spans 278 residues: Nudix hydrolase 2 (278 aa).

In terms of domain architecture, Nudix hydrolase spans 110 to 242; it reads SHRVGIGAFV…ELLRYMTDIC (133 aa). Positions 147 to 168 match the Nudix box motif; sequence GVVNEGEDIHDGSVREVKEETG. Position 162 (Glu162) interacts with Mg(2+). Residue Glu165 is the Proton acceptor of the active site. Glu166 lines the Mg(2+) pocket.

Belongs to the Nudix hydrolase family. Mg(2+) is required as a cofactor. The cofactor is Mn(2+). In terms of tissue distribution, expressed in roots, stems and leaves.

The catalysed reaction is ADP-D-ribose + H2O = D-ribose 5-phosphate + AMP + 2 H(+). It carries out the reaction NAD(+) + H2O = beta-nicotinamide D-ribonucleotide + AMP + 2 H(+). It catalyses the reaction NADH + H2O = reduced beta-nicotinamide D-ribonucleotide + AMP + 2 H(+). Its function is as follows. Probably mediates the hydrolysis of some nucleoside diphosphate derivatives. In vitro, it can use both NADH and ADP-ribose as substrates; however the relevance of such substrates in vivo is unclear. Confers tolerance to oxidative stress. The chain is Nudix hydrolase 2 from Arabidopsis thaliana (Mouse-ear cress).